The following is a 598-amino-acid chain: NADH-quinone oxidoreductase subunit C/D (598 aa).

The NADH dehydrogenase I subunit C stretch occupies residues 1–189 (MTDQIAQNSA…DPYVLTKQKE (189 aa)). The tract at residues 213–598 (DFMFLNLGPN…IDFVMSDVDR (386 aa)) is NADH dehydrogenase I subunit D.

This sequence in the N-terminal section; belongs to the complex I 30 kDa subunit family. The protein in the C-terminal section; belongs to the complex I 49 kDa subunit family. As to quaternary structure, NDH-1 is composed of 13 different subunits. Subunits NuoB, CD, E, F, and G constitute the peripheral sector of the complex.

It localises to the cell inner membrane. The catalysed reaction is a quinone + NADH + 5 H(+)(in) = a quinol + NAD(+) + 4 H(+)(out). NDH-1 shuttles electrons from NADH, via FMN and iron-sulfur (Fe-S) centers, to quinones in the respiratory chain. The immediate electron acceptor for the enzyme in this species is believed to be ubiquinone. Couples the redox reaction to proton translocation (for every two electrons transferred, four hydrogen ions are translocated across the cytoplasmic membrane), and thus conserves the redox energy in a proton gradient. This Proteus mirabilis (strain HI4320) protein is NADH-quinone oxidoreductase subunit C/D.